Reading from the N-terminus, the 590-residue chain is Glypican-3 (590 aa).

The N-terminal stretch at 1–25 (MMPGLKLYGALILCVLVLPFSRPSS) is a signal peptide. 7 disulfides stabilise this stretch: C30–C67, C60–C255, C68–C258, C190–C342, C245–C278, C267–C418, and C271–C406. N-linked (GlcNAc...) asparagine glycans are attached at residues N119 and N234. The N-linked (GlcNAc...) asparagine glycan is linked to N414. Disordered stretches follow at residues 429-450 (PGPGLKRVHPHGSESKQKTPEP) and 476-520 (WRAR…SGLG). The segment covering 495–513 (TDEDEEGLESGDCDDEDEC) has biased composition (acidic residues). S504 and S517 each carry an O-linked (Xyl...) (glycosaminoglycan) serine glycan.

The protein belongs to the glypican family. Heterodimer; disulfide-linked. Cleavage by a furin-like convertase results in production of alpha and beta chains which form a disulfide-linked heterodimer. Post-translationally, O-glycosylated; contains heparan sulfate and/or chondroitin sulfate. Cleaved intracellularly by a furin-like convertase to generate 2 subunits, alpha and beta, which remain associated through disulfide bonds and are associated with the cell surface via the GPI-anchor. This processing is essential for its role in inhibition of hedgehog signaling. A second proteolytic event may result in cleavage of the protein on the cell surface, separating it from the GPI-anchor and leading to its shedding from the cell surface. As to expression, maternally expressed and is almost ubiquitous during blastula and gastrula stages but becomes restricted to the prospective hindbrain by 24 hours post-fertilization.

It is found in the cell membrane. In terms of biological role, cell surface proteoglycan. Negatively regulates the hedgehog signaling pathway. Positively regulates the canonical and non-canonical Wnt signaling pathways. Binds to CD81 which decreases the availability of free CD81 for binding to the transcriptional repressor HHEX, resulting in nuclear translocation of HHEX and transcriptional repression. Inhibits the dipeptidyl peptidase activity of DPP4. Plays a role in limb patterning and skeletal development. Modulates the effects of growth factors on renal branching morphogenesis. Required for coronary vascular development. Plays a role in regulating cell movements during gastrulation. The sequence is that of Glypican-3 from Danio rerio (Zebrafish).